Here is a 513-residue protein sequence, read N- to C-terminus: MAFWQPGQALYLPPTPVTKVLCSEQYINVRDIFYHGETERMLTSGSILSLEVTQKHTTVPKVSPNQYRVFRVALPDPNQFALPDKALHNPSKERLVWAVVGVQVSRGQPLGGEVRGHSYFNTFLDAENVSKKVTAQGTDDRKQAGMDTKQQQVLMLGCTPAIGEYWTKARPCVTDRPDAGSCPPIELKLSFIEDGDMMDIGFGAANFKELNATKSDLPLDIANSICLYPDYLKMTEEAAGNSMFFFARKEQVYVRHIWTPWGTDKELPPEAYYLKPPGEMELKMPSVFFASPSGSLVSTDGQLFNRPYWILRAQGMNNGVCWNNTLFVTVGDNTRGSTLTITVPNNDEPLTEYDTSKFNVYQRHVEEFKLAFILELCSVELTPETVSSLQGSMPSILENWEINLQPPTSSVLEDIYRFIDSPATKCADNVSPSKPEDPYSAHKFWEVNLKEKLSLDLDQFPLGRLVLQFDCRLDRLLPQKDHFTYPEKRYKRHMRITGTVRKVLLYICFSLNS.

Belongs to the papillomaviridae L1 protein family. In terms of assembly, self-assembles into homopentamers. The capsid has an icosahedral symmetry and consists of 72 capsomers, with each capsomer being a pentamer of L1. Interacts with the minor capsid protein L2; this interaction is necessary for viral genome encapsidation. Interacts with protein E2; this interaction enhances E2-dependent replication and transcription activation.

It localises to the virion. The protein localises to the host nucleus. Functionally, forms an icosahedral capsid with a T=7 symmetry and a 50 nm diameter. The capsid is composed of 72 pentamers linked to each other by disulfide bonds and associated with L2 proteins. Binds to heparan sulfate proteoglycans on cell surface of basal layer keratinocytes to provide initial virion attachment. This binding mediates a conformational change in the virus capsid that facilitates efficient infection. The virion enters the host cell via endocytosis. During virus trafficking, L1 protein dissociates from the viral DNA and the genomic DNA is released to the host nucleus. The virion assembly takes place within the cell nucleus. Encapsulates the genomic DNA together with protein L2. This Odocoileus virginianus (White-tailed deer) protein is Major capsid protein L1.